Reading from the N-terminus, the 563-residue chain is Lipoprotein LpqB (563 aa).

Positions 1 to 19 (MRRMKALTAAMTAALLVSG) are cleaved as a signal peptide. Cys20 carries the N-palmitoyl cysteine lipid modification. Cys20 is lipidated: S-diacylglycerol cysteine.

Belongs to the LpqB lipoprotein family.

The protein localises to the cell membrane. In Corynebacterium efficiens (strain DSM 44549 / YS-314 / AJ 12310 / JCM 11189 / NBRC 100395), this protein is Lipoprotein LpqB.